The sequence spans 24 residues: Humanin-like 10 (24 aa).

It belongs to the humanin family. In terms of tissue distribution, expressed in mature brain, thyroid gland and testis.

The protein resides in the secreted. Its subcellular location is the cytoplasm. Plays a role as a neuroprotective and antiapoptotic factor. The chain is Humanin-like 10 from Homo sapiens (Human).